The primary structure comprises 525 residues: Protein-export membrane protein SecD (525 aa).

6 consecutive transmembrane segments (helical) span residues 16 to 36 (VLLL…KGLT), 368 to 388 (QAII…YFHY), 395 to 415 (IPVA…AALI), 421 to 441 (LPSI…QIVI), 466 to 486 (AFFI…FLLV), and 488 to 508 (FVGT…IGVL).

It belongs to the SecD/SecF family. SecD subfamily. As to quaternary structure, part of the protein translocation apparatus. Forms a complex with SecF.

It is found in the cell membrane. Its function is as follows. Involved in protein export. The protein is Protein-export membrane protein SecD of Thermococcus gammatolerans (strain DSM 15229 / JCM 11827 / EJ3).